Here is a 609-residue protein sequence, read N- to C-terminus: RAS guanyl-releasing protein 2 (609 aa).

The N-myristoyl glycine moiety is linked to residue Ala2. Positions 4 to 126 (TLDLDKGCTV…SLIDIDSVPT (123 aa)) constitute an N-terminal Ras-GEF domain. Leu7 carries S-palmitoyl cysteine lipidation. Residues Ser116, Ser117, and Ser147 each carry the phosphoserine modification. Residues 154–387 (EPMELAEHLT…YQLSLQREPR (234 aa)) form the Ras-GEF domain. Residues 382–406 (LQREPRSKSSPTSPTSCTPPPRPPV) form a disordered region. EF-hand domains follow at residues 426–461 (HIEKMVESVFRNFDVDGDGHISQEEFQIIRGNFPYL) and 455–490 (RGNFPYLSAFGDLDQNQDGCISREEMVSYFLRSSSV). Residues Asp439, Asp441, Asp443, His445, Glu450, Asp468, Asn470, Asp472, Cys474, and Glu479 each contribute to the Ca(2+) site. The Phorbol-ester/DAG-type zinc-finger motif lies at 498 to 548 (VHNFQESNSLRPVACRHCKALILGIYKQGLKCRACGVNCHKQCKDRLSVEC). Phosphoserine is present on residues Ser554 and Ser576. Residues 557-592 (LEGSAPSPSPMHSHHHRAFSFSLPRPGRRGSRPPEI) form a disordered region.

The protein belongs to the RASGRP family. In terms of assembly, forms a signaling complex with RAP1 and BRAF. Interacts with RAP1. Interacts with F-actin. Isoform 2 is palmitoylated and myristoylated. In terms of tissue distribution, detected in platelets, neutrophils and T lymphocytes (at protein level). Expressed in brain where it is enriched in the striatum. Also expressed in the hematopoietic system. Detected in heart, brain, lung, placenta, liver, skeletal muscle and kidney.

It localises to the cytoplasm. Its subcellular location is the cytosol. It is found in the cell membrane. The protein resides in the synapse. The protein localises to the synaptosome. It localises to the cell projection. Its subcellular location is the ruffle membrane. With respect to regulation, isoform 1 and isoform 2 are differently regulated by calcium and DAG. Functionally, functions as a calcium- and DAG-regulated nucleotide exchange factor specifically activating Rap through the exchange of bound GDP for GTP. May also activate other GTPases such as RRAS, RRAS2, NRAS, KRAS but not HRAS. Functions in aggregation of platelets and adhesion of T-lymphocytes and neutrophils probably through inside-out integrin activation. May function in the muscarinic acetylcholine receptor M1/CHRM1 signaling pathway. The protein is RAS guanyl-releasing protein 2 (RASGRP2) of Homo sapiens (Human).